Here is a 258-residue protein sequence, read N- to C-terminus: Ubiquinone/menaquinone biosynthesis C-methyltransferase UbiE (258 aa).

S-adenosyl-L-methionine is bound by residues threonine 81, aspartate 102, and 130–131; that span reads NA.

The protein belongs to the class I-like SAM-binding methyltransferase superfamily. MenG/UbiE family.

The catalysed reaction is a 2-demethylmenaquinol + S-adenosyl-L-methionine = a menaquinol + S-adenosyl-L-homocysteine + H(+). It carries out the reaction a 2-methoxy-6-(all-trans-polyprenyl)benzene-1,4-diol + S-adenosyl-L-methionine = a 5-methoxy-2-methyl-3-(all-trans-polyprenyl)benzene-1,4-diol + S-adenosyl-L-homocysteine + H(+). Its pathway is quinol/quinone metabolism; menaquinone biosynthesis; menaquinol from 1,4-dihydroxy-2-naphthoate: step 2/2. It participates in cofactor biosynthesis; ubiquinone biosynthesis. Functionally, methyltransferase required for the conversion of demethylmenaquinol (DMKH2) to menaquinol (MKH2) and the conversion of 2-polyprenyl-6-methoxy-1,4-benzoquinol (DDMQH2) to 2-polyprenyl-3-methyl-6-methoxy-1,4-benzoquinol (DMQH2). The polypeptide is Ubiquinone/menaquinone biosynthesis C-methyltransferase UbiE (Rhizobium meliloti (strain 1021) (Ensifer meliloti)).